Reading from the N-terminus, the 553-residue chain is Arginine--tRNA ligase (553 aa).

The 'HIGH' region motif lies at 132–140 (PTGDLHIGH).

This sequence belongs to the class-I aminoacyl-tRNA synthetase family. Monomer.

The protein resides in the cytoplasm. It catalyses the reaction tRNA(Arg) + L-arginine + ATP = L-arginyl-tRNA(Arg) + AMP + diphosphate. The polypeptide is Arginine--tRNA ligase (Staphylococcus aureus (strain N315)).